We begin with the raw amino-acid sequence, 460 residues long: MLKILIPTVMLIPTAWLAPTKWLWPTTLLHSLLIALASLSWLKNASETGWSSLNPYMATDPLSTPLLILSCWLLPLMILASQPNHTAHEPINRQRMYISLLTSLQFFLILAFSATEMIMFYVMFEVTLIPTLILITRWGNQTERLNAGTYFLFYTLAGSLPLLVALLLLQNSNGSLSLLTLLHSTPPQLSTYAAKIWWTGCILAFLVKMPLYGVHLWLPKAHVEAPIAGSMILAAVLLKLGGYGMMRILMTLEPLTKELSYPFIILALWGVIMTGSICMRQTDLKSLIAYSSVSHMGLVVGGILIQTPWGFTGALILMIAHGLTSSALFCLANTNYERTHSRTMLLARGLQMALPLMTAWWFIASLANLALPPLPNLMGELMIVTSLFNWSWWTIALTGLGMLITAGYSLYMFLMTQRGPLPSHIMALEPSHTREHLLIALHLLPLLLLILKPELIWGWS.

13 consecutive transmembrane segments (helical) span residues 22–42 (WLWPTTLLHSLLIALASLSWL), 61–81 (PLSTPLLILSCWLLPLMILAS), 97–114 (YISLLTSLQFFLILAFSA), 118–140 (IMFYVMFEVTLIPTLILITRWGN), 149–169 (TYFLFYTLAGSLPLLVALLLL), 196–216 (IWWTGCILAFLVKMPLYGVHL), 226–246 (PIAGSMILAAVLLKLGGYGMM), 259–279 (LSYPFIILALWGVIMTGSICM), 286–305 (SLIAYSSVSHMGLVVGGILI), 309–331 (WGFTGALILMIAHGLTSSALFCL), 352–372 (MALPLMTAWWFIASLANLALP), 395–415 (IALTGLGMLITAGYSLYMFLM), and 437–457 (LLIALHLLPLLLLILKPELIW).

It belongs to the complex I subunit 4 family.

It is found in the mitochondrion membrane. It carries out the reaction a ubiquinone + NADH + 5 H(+)(in) = a ubiquinol + NAD(+) + 4 H(+)(out). Core subunit of the mitochondrial membrane respiratory chain NADH dehydrogenase (Complex I) that is believed to belong to the minimal assembly required for catalysis. Complex I functions in the transfer of electrons from NADH to the respiratory chain. The immediate electron acceptor for the enzyme is believed to be ubiquinone. This Tetraodon nigroviridis (Spotted green pufferfish) protein is NADH-ubiquinone oxidoreductase chain 4 (MT-ND4).